The chain runs to 475 residues: MLASLTSRSATSFSIIWALVSAILILSILIWLIITIFFAWNLHLKNNKKRTKYHLEPEQIKHKIIQNKTKLGKMLDFYQQQINTTATELKWLDGQFQQIDETDKKKAHQIAIRLARNQLLQQLSVKLDQKQFSQRANNELQKLKLSNLESFTNQKIKWDQEGMKSAVSRVTINEWTFNHFAGKNRVYWDYFKQVCDVDCSIKPLKDQLEITFSSWSLLKRLQAKNLFNKLIAQSSSVKMSEKLINNALQLVQDNLALQASESGNKLLKEFELSCTNTQLVQLLGFQQFYFGTNLLSLLDLSRSIAVLVRFLNEHCKWELNERLLVETALFNNLQWVNNNDFFLKSHNDLKQLHLSAEQLAIIEQQNRPFYIDAYALLIAGVKQMLMEHDAVEPKQIHFHNAKKVMESFQLFGIDQLALIEYNNCLYGFVTTKLYEIKQLDDLALFKVLFKSFLNKHLKQKFATISLFVNTQTLMI.

Residues 19–39 (LVSAILILSILIWLIITIFFA) form a helical membrane-spanning segment.

The protein localises to the membrane. This is an uncharacterized protein from Mycoplasma pneumoniae (strain ATCC 29342 / M129 / Subtype 1) (Mycoplasmoides pneumoniae).